We begin with the raw amino-acid sequence, 90 residues long: Barrier-to-autointegration factor A (90 aa).

Belongs to the BAF family. In terms of assembly, homodimer. Interacts with nemp1a and nemp1b. Phosphorylated during S and M phases.

Its subcellular location is the nucleus. The protein localises to the chromosome. The protein resides in the nucleus envelope. It localises to the cytoplasm. Its function is as follows. Non-specific DNA-binding protein that plays key roles in mitotic nuclear reassembly, chromatin organization, DNA damage response, gene expression and intrinsic immunity against foreign DNA. Contains two non-specific double-stranded DNA (dsDNA)-binding sites which promote DNA cross-bridging. Plays a key role in nuclear membrane reformation at the end of mitosis by driving formation of a single nucleus in a spindle-independent manner. Transiently cross-bridges anaphase chromosomes via its ability to bridge distant DNA sites, leading to the formation of a dense chromatin network at the chromosome ensemble surface that limits membranes to the surface. Also acts as a negative regulator of innate immune activation by restricting CGAS activity toward self-DNA upon acute loss of nuclear membrane integrity. Outcompetes CGAS for DNA-binding, thereby preventing CGAS activation and subsequent damaging autoinflammatory responses. Also involved in DNA damage response; acts by inhibiting the ADP-ribosyltransferase activity of PARP1. Involved in the recognition of exogenous dsDNA in the cytosol: associates with exogenous dsDNA immediately after its appearance in the cytosol at endosome breakdown and is required to avoid autophagy. This Xenopus laevis (African clawed frog) protein is Barrier-to-autointegration factor A (banf1-a).